We begin with the raw amino-acid sequence, 2118 residues long: Cilia- and flagella-associated protein 65 (2118 aa).

A helical membrane pass occupies residues 6 to 26 (GSLRALLLAAAAAAAAAAGAV). The MSP domain maps to 615–736 (FLHSNPEFGP…HTPRLTTDLP (122 aa)). Disordered regions lie at residues 1007 to 1029 (APLL…LDAG), 1764 to 1909 (SGGS…DDFA), and 1924 to 1958 (AGGG…APPR). The span at 1825 to 1834 (GGAGGAPGGD) shows a compositional bias: gly residues. Positions 1840–1849 (RPGTPSMTAA) are enriched in low complexity. Positions 1850 to 1859 (AHHHHHHPRH) are enriched in basic residues. Composition is skewed to low complexity over residues 1892 to 1902 (SISGAPDPDSA) and 1936 to 1949 (PGGS…ELAP). Residues 2016–2045 (AVRAAAEAARAEAEARAAAEAATKAAAEAE) adopt a coiled-coil conformation.

It belongs to the CFAP65 family.

The protein localises to the cell projection. It localises to the cilium. The protein resides in the flagellum membrane. It is found in the cytoplasm. In terms of biological role, may play a role in flagellar formation and mobility. In Chlamydomonas reinhardtii (Chlamydomonas smithii), this protein is Cilia- and flagella-associated protein 65.